A 237-amino-acid chain; its full sequence is Putative glutathione-dependent formaldehyde-activating enzyme (237 aa).

Residues 38 to 152 enclose the CENP-V/GFA domain; sequence ITLICHCPPS…LGQSGGSEGE (115 aa). Zn(2+)-binding residues include Cys-42, Cys-44, Cys-67, Cys-69, Cys-72, Cys-114, and Cys-117.

It belongs to the Gfa family. It depends on Zn(2+) as a cofactor.

The enzyme catalyses S-(hydroxymethyl)glutathione = glutathione + formaldehyde. The protein operates within one-carbon metabolism; formaldehyde degradation; formate from formaldehyde (glutathione route): step 1/3. Functionally, catalyzes the condensation of formaldehyde and glutathione to S-hydroxymethylglutathione. This Sordaria macrospora (strain ATCC MYA-333 / DSM 997 / K(L3346) / K-hell) protein is Putative glutathione-dependent formaldehyde-activating enzyme.